The chain runs to 157 residues: Small ribosomal subunit protein uS7 (157 aa).

This sequence belongs to the universal ribosomal protein uS7 family. In terms of assembly, part of the 30S ribosomal subunit. Contacts proteins S9 and S11.

Its function is as follows. One of the primary rRNA binding proteins, it binds directly to 16S rRNA where it nucleates assembly of the head domain of the 30S subunit. Is located at the subunit interface close to the decoding center, probably blocks exit of the E-site tRNA. The chain is Small ribosomal subunit protein uS7 from Polaromonas sp. (strain JS666 / ATCC BAA-500).